A 186-amino-acid polypeptide reads, in one-letter code: Ribosome-recycling factor (186 aa).

The interval 135 to 164 is disordered; that stretch reads DGMDDLKKAEKDGEIGQDESRAQSERVQKM.

The protein belongs to the RRF family.

It localises to the cytoplasm. Responsible for the release of ribosomes from messenger RNA at the termination of protein biosynthesis. May increase the efficiency of translation by recycling ribosomes from one round of translation to another. This is Ribosome-recycling factor from Rhizobium meliloti (strain 1021) (Ensifer meliloti).